The following is a 335-amino-acid chain: Succinylglutamate desuccinylase (335 aa).

The Zn(2+) site is built by H59, E62, and H151. Residue E215 is part of the active site.

Belongs to the AspA/AstE family. Succinylglutamate desuccinylase subfamily. Zn(2+) serves as cofactor.

The enzyme catalyses N-succinyl-L-glutamate + H2O = L-glutamate + succinate. It functions in the pathway amino-acid degradation; L-arginine degradation via AST pathway; L-glutamate and succinate from L-arginine: step 5/5. Its function is as follows. Transforms N(2)-succinylglutamate into succinate and glutamate. This Pseudomonas putida (strain GB-1) protein is Succinylglutamate desuccinylase.